Consider the following 84-residue polypeptide: Small ribosomal subunit protein uS17 (84 aa).

It belongs to the universal ribosomal protein uS17 family. In terms of assembly, part of the 30S ribosomal subunit.

In terms of biological role, one of the primary rRNA binding proteins, it binds specifically to the 5'-end of 16S ribosomal RNA. The protein is Small ribosomal subunit protein uS17 of Vibrio atlanticus (strain LGP32) (Vibrio splendidus (strain Mel32)).